Consider the following 169-residue polypeptide: ATP synthase subunit b (169 aa).

The helical transmembrane segment at 14–34 (TFLAMLISFLILVFILQQVAF) threads the bilayer.

Belongs to the ATPase B chain family. In terms of assembly, F-type ATPases have 2 components, F(1) - the catalytic core - and F(0) - the membrane proton channel. F(1) has five subunits: alpha(3), beta(3), gamma(1), delta(1), epsilon(1). F(0) has four main subunits: a(1), b(2) and c(10-14). The alpha and beta chains form an alternating ring which encloses part of the gamma chain. F(1) is attached to F(0) by a central stalk formed by the gamma and epsilon chains, while a peripheral stalk is formed by the delta and b chains.

The protein localises to the cell membrane. Functionally, f(1)F(0) ATP synthase produces ATP from ADP in the presence of a proton or sodium gradient. F-type ATPases consist of two structural domains, F(1) containing the extramembraneous catalytic core and F(0) containing the membrane proton channel, linked together by a central stalk and a peripheral stalk. During catalysis, ATP synthesis in the catalytic domain of F(1) is coupled via a rotary mechanism of the central stalk subunits to proton translocation. Component of the F(0) channel, it forms part of the peripheral stalk, linking F(1) to F(0). This Heliobacterium modesticaldum (strain ATCC 51547 / Ice1) protein is ATP synthase subunit b.